The primary structure comprises 496 residues: Glycylpeptide N-tetradecanoyltransferase 1 (496 aa).

A disordered region spans residues 1–81 (MADESETAVK…DSTQDQPVKM (81 aa)). Phosphoserine is present on residues S31 and S47. The span at 55-66 (KKKKKKQKKKKE) shows a compositional bias: basic residues. S83 bears the Phosphoserine mark. The tetradecanoyl-CoA site is built by Q118, F119, W120, F247, L248, C249, V250, S256, R258, V259, and A260.

It belongs to the NMT family.

Its subcellular location is the cytoplasm. It localises to the cytosol. The protein resides in the membrane. The catalysed reaction is N-terminal glycyl-[protein] + tetradecanoyl-CoA = N-tetradecanoylglycyl-[protein] + CoA + H(+). It carries out the reaction N-terminal glycyl-L-lysyl-[protein] + tetradecanoyl-CoA = N-terminal glycyl-(N(6)-tetradecanoyl)-L-lysyl-[protein] + CoA + H(+). Adds a myristoyl group to the N-terminal glycine residue of certain cellular and viral proteins. Also able to mediate N-terminal lysine myristoylation of proteins: catalyzes myristoylation of ARF6 on both 'Gly-2' and 'Lys-3'. Lysine myristoylation is required to maintain ARF6 on membranes during the GTPase cycle. This is Glycylpeptide N-tetradecanoyltransferase 1 (Nmt1) from Rattus norvegicus (Rat).